Reading from the N-terminus, the 182-residue chain is Biotin transporter BioY2 (182 aa).

A run of 5 helical transmembrane segments spans residues 12–32 (IALG…IGIV), 54–74 (FFAI…FTGG), 78–98 (IAVL…MGTL), 111–131 (IPAF…GTLW), and 150–170 (PFVF…LALI).

It belongs to the BioY family. As to quaternary structure, in E.coli forms a stable energy-coupling factor (ECF) transporter complex composed of 2 membrane-embedded substrate-binding protein (S component), 2 ATP-binding proteins (A and A' components) and 2 transmembrane proteins (T component), probably with a stoichiometry of 2:1:1:2. May be able to interact with more than 1 S component at a time.

Its subcellular location is the cell membrane. Functionally, probably a biotin-binding protein that interacts with the energy-coupling factor (ECF) ABC-transporter complex. Unlike classic ABC transporters this ECF transporter provides the energy necessary to transport a number of different substrates. The substrates themselves are bound by transmembrane, not extracytoplasmic soluble proteins. This is Biotin transporter BioY2 (bioY2) from Lactococcus lactis subsp. cremoris (strain MG1363).